A 181-amino-acid chain; its full sequence is Large ribosomal subunit protein uL5 (181 aa).

This sequence belongs to the universal ribosomal protein uL5 family. In terms of assembly, part of the 50S ribosomal subunit; part of the 5S rRNA/L5/L18/L25 subcomplex. Contacts the 5S rRNA and the P site tRNA. Forms a bridge to the 30S subunit in the 70S ribosome.

In terms of biological role, this is one of the proteins that bind and probably mediate the attachment of the 5S RNA into the large ribosomal subunit, where it forms part of the central protuberance. In the 70S ribosome it contacts protein S13 of the 30S subunit (bridge B1b), connecting the 2 subunits; this bridge is implicated in subunit movement. Contacts the P site tRNA; the 5S rRNA and some of its associated proteins might help stabilize positioning of ribosome-bound tRNAs. The polypeptide is Large ribosomal subunit protein uL5 (Campylobacter hominis (strain ATCC BAA-381 / DSM 21671 / CCUG 45161 / LMG 19568 / NCTC 13146 / CH001A)).